The primary structure comprises 648 residues: Cell surface glycoprotein MUC18 (648 aa).

Residues 1-23 (MGLPKLVCVFLFAACCCCRRAAG) form the signal peptide. 2 consecutive Ig-like V-type domains span residues 24 to 131 (VPGE…HYVE) and 141 to 244 (PTIQ…KEVT). The Extracellular portion of the chain corresponds to 24–563 (VPGEEKQPVP…LPQPESKGVV (540 aa)). Disulfide bonds link cysteine 50/cysteine 118, cysteine 163/cysteine 225, cysteine 274/cysteine 322, cysteine 367/cysteine 409, and cysteine 454/cysteine 501. A glycan (N-linked (GlcNAc...) asparagine) is linked at asparagine 58. Ig-like C2-type domains follow at residues 246–332 (PVFY…TTIT), 337–426 (PLEL…QLVS), and 432–512 (SPWM…SNTT). The disordered stretch occupies residues 281 to 304 (QPHFTINKKDPSTGEMEEESTDEN). A glycan (N-linked (GlcNAc...) asparagine) is linked at asparagine 510. Over residues 532–549 (TGLSTLTVSPHTRANSTS) the composition is skewed to polar residues. The segment at 532–554 (TGLSTLTVSPHTRANSTSTEKKL) is disordered. Residues 564 to 584 (IVAVIVCTLVLAVLGAALYFF) form a helical membrane-spanning segment. Residues 585 to 648 (YKKGKLPCGR…QGEKYIDLRH (64 aa)) lie on the Cytoplasmic side of the membrane. Residues serine 608 and serine 616 each carry the phosphoserine modification. The interval 625–648 (LLQGSNGDKRAPGDQGEKYIDLRH) is disordered. Positions 631 to 648 (GDKRAPGDQGEKYIDLRH) are enriched in basic and acidic residues.

In terms of tissue distribution, detected in melanoma cell lines.

Its subcellular location is the membrane. Its function is as follows. Plays a role in cell adhesion, and in cohesion of the endothelial monolayer at intercellular junctions in vascular tissue. Its expression may allow melanoma cells to interact with cellular elements of the vascular system, thereby enhancing hematogeneous tumor spread. Could be an adhesion molecule active in neural crest cells during embryonic development. Acts as a surface receptor that triggers tyrosine phosphorylation of FYN and PTK2/FAK1, and a transient increase in the intracellular calcium concentration. The sequence is that of Cell surface glycoprotein MUC18 (Mcam) from Mus musculus (Mouse).